An 890-amino-acid chain; its full sequence is DNA mismatch repair protein MutS (890 aa).

Residue 607-614 (GPNMSGKS) coordinates ATP. Positions 832 to 851 (ESQLSFFGGEQSSKKQDKPL) are disordered.

It belongs to the DNA mismatch repair MutS family.

In terms of biological role, this protein is involved in the repair of mismatches in DNA. It is possible that it carries out the mismatch recognition step. This protein has a weak ATPase activity. This is DNA mismatch repair protein MutS from Bacillus cereus (strain B4264).